Consider the following 402-residue polypeptide: Phosphoglycerate kinase (402 aa).

Substrate-binding positions include 21–23, Arg-36, 59–62, Arg-118, and Arg-151; these read DFN and HLGR. Residues Lys-201, Gly-293, Glu-324, and 353–356 contribute to the ATP site; that span reads GGDS.

This sequence belongs to the phosphoglycerate kinase family. Monomer.

Its subcellular location is the cytoplasm. It carries out the reaction (2R)-3-phosphoglycerate + ATP = (2R)-3-phospho-glyceroyl phosphate + ADP. It functions in the pathway carbohydrate degradation; glycolysis; pyruvate from D-glyceraldehyde 3-phosphate: step 2/5. The sequence is that of Phosphoglycerate kinase from Thermosipho africanus (strain TCF52B).